The following is a 78-amino-acid chain: NEDD8-like protein RUB3 (78 aa).

G76 participates in a covalent cross-link: Glycyl lysine isopeptide (Gly-Lys) (interchain with K-? in acceptor proteins). A propeptide spanning residues 77 to 78 (CC) is cleaved from the precursor.

As to expression, detected in stems and flower buds, but not in leaves, mature flowers and seedlings.

May function as a stable post-translational protein modifier. In Arabidopsis thaliana (Mouse-ear cress), this protein is NEDD8-like protein RUB3 (RUB3).